A 129-amino-acid polypeptide reads, in one-letter code: UPF0344 protein SAR0931 (129 aa).

Helical transmembrane passes span 1–21 (MLHL…ATYL), 36–56 (LHMV…WILI), 67–87 (MLLT…EVSI), and 99–119 (MFWI…ILPL).

Belongs to the UPF0344 family.

Its subcellular location is the cell membrane. The protein is UPF0344 protein SAR0931 of Staphylococcus aureus (strain MRSA252).